The sequence spans 423 residues: 5-hydroxytryptamine receptor 1A (423 aa).

Topologically, residues 1-38 are extracellular; that stretch reads MEGLSPRQGNNTTSSEGPFGTLGNATGISDVTFSYQVI. 3 N-linked (GlcNAc...) asparagine glycosylation sites follow: Asn-10, Asn-11, and Asn-24. Residues 39 to 59 traverse the membrane as a helical segment; it reads TSLLLGTLIFCAVLGNACVVA. Over 60–73 the chain is Cytoplasmic; that stretch reads AIALERSLQNVANY. A helical transmembrane segment spans residues 74-98; it reads LIGSLAVTDLMVSVLVLPMAALYQV. At 99–107 the chain is on the extracellular side; sequence LNKWTLGQV. The chain crosses the membrane as a helical span at residues 108-132; the sequence is TCDLFIALDVLCCTSSILHLCAIAL. Cysteines 109 and 187 form a disulfide. 2 residues coordinate serotonin: Asp-116 and Cys-120. Positions 133 to 135 match the DRY motif; important for ligand-induced conformation changes motif; that stretch reads DRY. The Cytoplasmic segment spans residues 133–152; it reads DRYWAITDPIDYVNKRTPRR. The chain crosses the membrane as a helical span at residues 153–174; sequence AAALISLTWLIGFLISIPPMLG. Over 175-193 the chain is Extracellular; the sequence is WRTPEDRSDPDACTISKDH. Residues 194–216 form a helical membrane-spanning segment; the sequence is GYTIYSTFGAFYIPLLLMLVLYG. Residues 217–346 are Cytoplasmic-facing; that stretch reads RIFRAARFRI…LARERKTVKT (130 aa). The disordered stretch occupies residues 235-277; sequence RKGADARSGVSPAPQPRKSVNGEPGGREWRQGPGSQAGGPLCT. 1D-myo-inositol 4-phosphate contacts are provided by Lys-345, Thr-346, and Gly-352. Residues 347–370 form a helical membrane-spanning segment; it reads LGIIMGTFILCWLPFFIVALVLPF. The Extracellular segment spans residues 371–378; the sequence is CESSCHMP. Residues 379 to 403 traverse the membrane as a helical segment; it reads TLLGAIINWLGYSNSLLNPVIYAYF. The NPxxY motif; important for ligand-induced conformation changes and signaling motif lies at 396–400; the sequence is NPVIY. The 1D-myo-inositol 4-phosphate site is built by Phe-403, Asn-404, and Lys-405. Residues 404–423 lie on the Cytoplasmic side of the membrane; that stretch reads NKDFQNAFKKIVRCKFCRRR.

It belongs to the G-protein coupled receptor 1 family. 5-hydroxytryptamine receptor subfamily. HTR1A sub-subfamily. Heterodimer; heterodimerizes with GPER1. Interacts with YIF1B. Interacts with GPR39 and GALR1.

It is found in the cell membrane. The protein resides in the cell projection. The protein localises to the dendrite. Its activity is regulated as follows. G-protein coupled receptor activity is regulated by lipids: phosphatidylinositol 4-phosphate increases HTR1A-mediated activity. In terms of biological role, G-protein coupled receptor for 5-hydroxytryptamine (serotonin). Also functions as a receptor for various drugs and psychoactive substances. Ligand binding causes a conformation change that triggers signaling via guanine nucleotide-binding proteins (G proteins) and modulates the activity of downstream effectors, such as adenylate cyclase. HTR1A is coupled to G(i)/G(o) G alpha proteins and mediates inhibitory neurotransmission: signaling inhibits adenylate cyclase activity and activates a phosphatidylinositol-calcium second messenger system that regulates the release of Ca(2+) ions from intracellular stores. Beta-arrestin family members regulate signaling by mediating both receptor desensitization and resensitization processes. This is 5-hydroxytryptamine receptor 1A (HTR1A) from Canis lupus familiaris (Dog).